Reading from the N-terminus, the 301-residue chain is Protoheme IX farnesyltransferase (301 aa).

8 consecutive transmembrane segments (helical) span residues 25 to 45 (VTQL…PGMV), 47 to 67 (WTPL…AFAI), 97 to 117 (ILLF…TFAN), 119 to 139 (LTMW…TLLL), 147 to 167 (IVIG…AVTG), 173 to 193 (AWIL…ALAL), 235 to 255 (FISG…GALF), and 279 to 299 (IVYL…RVLI).

The protein belongs to the UbiA prenyltransferase family. Protoheme IX farnesyltransferase subfamily.

The protein resides in the cell inner membrane. The enzyme catalyses heme b + (2E,6E)-farnesyl diphosphate + H2O = Fe(II)-heme o + diphosphate. Its pathway is porphyrin-containing compound metabolism; heme O biosynthesis; heme O from protoheme: step 1/1. In terms of biological role, converts heme B (protoheme IX) to heme O by substitution of the vinyl group on carbon 2 of heme B porphyrin ring with a hydroxyethyl farnesyl side group. The protein is Protoheme IX farnesyltransferase of Paraburkholderia xenovorans (strain LB400).